Here is a 118-residue protein sequence, read N- to C-terminus: NLIDFKNMIKCTNTRHWVSFTNYGCYCGYGGSGTPVDELDKCCQVHDKCYDTAKHVCKCSPSMTMYSYDCSEGKLTCKDNNTKCKDFVCNCDRTAALCFAKAPYNNKNFKIDPTKGCQ.

Cystine bridges form between cysteine 11-cysteine 70, cysteine 25-cysteine 117, cysteine 27-cysteine 43, cysteine 42-cysteine 98, cysteine 49-cysteine 91, cysteine 59-cysteine 84, and cysteine 77-cysteine 89. Tyrosine 26, glycine 28, and glycine 30 together coordinate Ca(2+). Histidine 46 is a catalytic residue. Residue aspartate 47 coordinates Ca(2+). Aspartate 92 is an active-site residue.

The protein belongs to the phospholipase A2 family. Group I subfamily. D49 sub-subfamily. It depends on Ca(2+) as a cofactor. Expressed by the venom gland.

The protein localises to the secreted. It catalyses the reaction a 1,2-diacyl-sn-glycero-3-phosphocholine + H2O = a 1-acyl-sn-glycero-3-phosphocholine + a fatty acid + H(+). In terms of biological role, snake venom phospholipase A2 (PLA2) that has only a weak enzymatic activity. It has a myotoxic activity in vivo (dystrophic effect). PLA2 catalyzes the calcium-dependent hydrolysis of the 2-acyl groups in 3-sn-phosphoglycerides. The sequence is that of Basic phospholipase A2 nigroxin B from Micrurus nigrocinctus (Central American coral snake).